A 427-amino-acid chain; its full sequence is Large ribosomal subunit protein uL4 (427 aa).

Ala-2 is modified (N-acetylalanine). An N6-acetyllysine modification is found at Lys-14. Arg-97 is modified (omega-N-methylarginine). The residue at position 106 (Lys-106) is an N6-acetyllysine. Lys-239 is covalently cross-linked (Glycyl lysine isopeptide (Lys-Gly) (interchain with G-Cter in SUMO2)). Lys-259 is modified (N6-acetyllysine). Thr-266 carries the post-translational modification Phosphothreonine. Ser-290 and Ser-295 each carry phosphoserine. Arg-300 bears the Citrulline mark. Lys-327 participates in a covalent cross-link: Glycyl lysine isopeptide (Lys-Gly) (interchain with G-Cter in SUMO2). Residues Lys-333 and Lys-353 each carry the N6-acetyllysine modification. At Lys-364 the chain carries N6-acetyllysine; alternate. Lys-364 participates in a covalent cross-link: Glycyl lysine isopeptide (Lys-Gly) (interchain with G-Cter in SUMO1); alternate. Ser-365 carries the phosphoserine modification. Residues 369–427 are disordered; sequence AAVAGKKPVVGKKGKKVAVGVKKQKKPLVGKKAAATKKPAPEKKSTEKKPTTEEKKPAA. Basic residues predominate over residues 377-397; the sequence is VVGKKGKKVAVGVKKQKKPLV. Residues 407 to 427 show a composition bias toward basic and acidic residues; it reads PAPEKKSTEKKPTTEEKKPAA.

Belongs to the universal ribosomal protein uL4 family. In terms of assembly, component of the large ribosomal subunit. May bind IPO9 with low affinity. Interacts with RBM3. Citrullinated by PADI4.

The protein resides in the cytoplasm. In terms of biological role, component of the large ribosomal subunit. The ribosome is a large ribonucleoprotein complex responsible for the synthesis of proteins in the cell. This is Large ribosomal subunit protein uL4 (RPL4) from Macaca fascicularis (Crab-eating macaque).